The sequence spans 272 residues: Shikimate dehydrogenase (NADP(+)) (272 aa).

Shikimate is bound by residues 14–16 and Thr-61; that span reads SRS. Lys-65 acts as the Proton acceptor in catalysis. Glu-77 is an NADP(+) binding site. Asn-86 and Asp-102 together coordinate shikimate. NADP(+) contacts are provided by residues 126–130, 149–154, and Met-213; these read GVGGA and NRTFPR. Position 215 (Tyr-215) interacts with shikimate. Gly-237 is an NADP(+) binding site.

This sequence belongs to the shikimate dehydrogenase family. As to quaternary structure, homodimer.

It catalyses the reaction shikimate + NADP(+) = 3-dehydroshikimate + NADPH + H(+). It participates in metabolic intermediate biosynthesis; chorismate biosynthesis; chorismate from D-erythrose 4-phosphate and phosphoenolpyruvate: step 4/7. In terms of biological role, involved in the biosynthesis of the chorismate, which leads to the biosynthesis of aromatic amino acids. Catalyzes the reversible NADPH linked reduction of 3-dehydroshikimate (DHSA) to yield shikimate (SA). This chain is Shikimate dehydrogenase (NADP(+)), found in Sodalis glossinidius (strain morsitans).